Consider the following 611-residue polypeptide: Glutamine--fructose-6-phosphate aminotransferase [isomerizing] (611 aa).

Cys-2 (nucleophile; for GATase activity) is an active-site residue. One can recognise a Glutamine amidotransferase type-2 domain in the interval 2–219 (CGIVGAVAER…EGDIAEIRRD (218 aa)). 2 consecutive SIS domains span residues 287-427 (AAEL…VKGS) and 460-601 (VAEL…VDQP). The active-site For Fru-6P isomerization activity is Lys-606.

As to quaternary structure, homodimer.

The protein resides in the cytoplasm. It catalyses the reaction D-fructose 6-phosphate + L-glutamine = D-glucosamine 6-phosphate + L-glutamate. In terms of biological role, catalyzes the first step in hexosamine metabolism, converting fructose-6P into glucosamine-6P using glutamine as a nitrogen source. In Pseudomonas syringae pv. tomato (strain ATCC BAA-871 / DC3000), this protein is Glutamine--fructose-6-phosphate aminotransferase [isomerizing].